The chain runs to 118 residues: MALQWVWLCLRKSLRNNKLMMCRILIELLKILLDVLDSGDYADGPSDNPGTGIAKEEIVKCIDFLKMLEAGDDDIDKYGFPELLAAHFANCLAVCLKAARESDAMFCCSLEANSSDFN.

In Bos taurus (Bovine), this protein is Bovine agnoprotein.